The sequence spans 513 residues: Probable cytosol aminopeptidase (513 aa).

Mn(2+) is bound by residues lysine 277 and aspartate 282. Residue lysine 289 is part of the active site. 3 residues coordinate Mn(2+): aspartate 300, aspartate 359, and glutamate 361. Arginine 363 is an active-site residue.

Belongs to the peptidase M17 family. Requires Mn(2+) as cofactor.

It localises to the cytoplasm. The enzyme catalyses Release of an N-terminal amino acid, Xaa-|-Yaa-, in which Xaa is preferably Leu, but may be other amino acids including Pro although not Arg or Lys, and Yaa may be Pro. Amino acid amides and methyl esters are also readily hydrolyzed, but rates on arylamides are exceedingly low.. It carries out the reaction Release of an N-terminal amino acid, preferentially leucine, but not glutamic or aspartic acids.. Functionally, presumably involved in the processing and regular turnover of intracellular proteins. Catalyzes the removal of unsubstituted N-terminal amino acids from various peptides. The sequence is that of Probable cytosol aminopeptidase from Mycobacterium sp. (strain JLS).